The primary structure comprises 232 residues: Phosphatidylserine decarboxylase proenzyme (232 aa).

S190 (schiff-base intermediate with substrate; via pyruvic acid) is an active-site residue. Pyruvic acid (Ser); by autocatalysis is present on S190.

Belongs to the phosphatidylserine decarboxylase family. PSD-A subfamily. In terms of assembly, heterodimer of a large membrane-associated beta subunit and a small pyruvoyl-containing alpha subunit. Pyruvate serves as cofactor. Post-translationally, is synthesized initially as an inactive proenzyme. Formation of the active enzyme involves a self-maturation process in which the active site pyruvoyl group is generated from an internal serine residue via an autocatalytic post-translational modification. Two non-identical subunits are generated from the proenzyme in this reaction, and the pyruvate is formed at the N-terminus of the alpha chain, which is derived from the carboxyl end of the proenzyme. The post-translation cleavage follows an unusual pathway, termed non-hydrolytic serinolysis, in which the side chain hydroxyl group of the serine supplies its oxygen atom to form the C-terminus of the beta chain, while the remainder of the serine residue undergoes an oxidative deamination to produce ammonia and the pyruvoyl prosthetic group on the alpha chain.

Its subcellular location is the cell membrane. It catalyses the reaction a 1,2-diacyl-sn-glycero-3-phospho-L-serine + H(+) = a 1,2-diacyl-sn-glycero-3-phosphoethanolamine + CO2. The protein operates within phospholipid metabolism; phosphatidylethanolamine biosynthesis; phosphatidylethanolamine from CDP-diacylglycerol: step 2/2. Catalyzes the formation of phosphatidylethanolamine (PtdEtn) from phosphatidylserine (PtdSer). The polypeptide is Phosphatidylserine decarboxylase proenzyme (Rhodopseudomonas palustris (strain TIE-1)).